The following is a 593-amino-acid chain: NADH-quinone oxidoreductase subunit C/D (593 aa).

The segment at 1 to 184 (MTADSALYIP…DPYSLSAAKQ (184 aa)) is NADH dehydrogenase I subunit C. The tract at residues 208-593 (DYMFLNLGPN…IDFVMADVDR (386 aa)) is NADH dehydrogenase I subunit D.

This sequence in the N-terminal section; belongs to the complex I 30 kDa subunit family. The protein in the C-terminal section; belongs to the complex I 49 kDa subunit family. As to quaternary structure, NDH-1 is composed of 13 different subunits. Subunits NuoB, CD, E, F, and G constitute the peripheral sector of the complex.

Its subcellular location is the cell inner membrane. It catalyses the reaction a quinone + NADH + 5 H(+)(in) = a quinol + NAD(+) + 4 H(+)(out). Its function is as follows. NDH-1 shuttles electrons from NADH, via FMN and iron-sulfur (Fe-S) centers, to quinones in the respiratory chain. The immediate electron acceptor for the enzyme in this species is believed to be ubiquinone. Couples the redox reaction to proton translocation (for every two electrons transferred, four hydrogen ions are translocated across the cytoplasmic membrane), and thus conserves the redox energy in a proton gradient. In Pseudomonas paraeruginosa (strain DSM 24068 / PA7) (Pseudomonas aeruginosa (strain PA7)), this protein is NADH-quinone oxidoreductase subunit C/D.